A 424-amino-acid chain; its full sequence is Argininosuccinate synthase (424 aa).

ATP-binding positions include 9 to 17 (AYSGGLDTS) and A35. Residues Y86 and S91 each coordinate L-citrulline. 114 to 122 (SHGATGKGN) contacts ATP. Residues T118, N122, and D123 each coordinate L-aspartate. An L-citrulline-binding site is contributed by N122. Positions 126, 179, 188, 269, and 281 each coordinate L-citrulline.

Belongs to the argininosuccinate synthase family. Homotetramer.

It catalyses the reaction L-citrulline + L-aspartate + ATP = 2-(N(omega)-L-arginino)succinate + AMP + diphosphate + H(+). The protein operates within amino-acid biosynthesis; L-arginine biosynthesis; L-arginine from L-ornithine and carbamoyl phosphate: step 2/3. Its pathway is nitrogen metabolism; urea cycle; (N(omega)-L-arginino)succinate from L-aspartate and L-citrulline: step 1/1. This is Argininosuccinate synthase from Anopheles gambiae (African malaria mosquito).